Here is a 200-residue protein sequence, read N- to C-terminus: Small ribosomal subunit protein eS1 (200 aa).

The protein belongs to the eukaryotic ribosomal protein eS1 family. Part of the 30S ribosomal subunit.

The chain is Small ribosomal subunit protein eS1 from Thermococcus kodakarensis (strain ATCC BAA-918 / JCM 12380 / KOD1) (Pyrococcus kodakaraensis (strain KOD1)).